A 428-amino-acid chain; its full sequence is Palmitoyltransferase ZDHHC23-B (428 aa).

The Cytoplasmic portion of the chain corresponds to 1-82; it reads MSIMKKRSSR…RVPWISGARQ (82 aa). A helical membrane pass occupies residues 83–99; it reads IDVSLIPPLILLPVFLH. At 100-105 the chain is on the lumenal side; sequence IAALHY. A helical transmembrane segment spans residues 106-125; the sequence is LLGIIMLTAMPITVLWYYFF. Topologically, residues 126–132 are cytoplasmic; it reads THRKKGR. A helical transmembrane segment spans residues 133 to 153; it reads TLFFLGLALFSLFYMFYLFLT. The Lumenal portion of the chain corresponds to 154 to 160; that stretch reads QVVPRGE. The chain crosses the membrane as a helical span at residues 161-181; the sequence is VTELQLAVVTAGVALTVIFLM. The Cytoplasmic segment spans residues 182 to 294; sequence LTKRGPGLVR…SCVGLANHRT (113 aa). The region spanning 250–300 is the DHHC domain; sequence NWCAVCKVVRPQRAGHCRICGVCVLRLDHHCVWINSCVGLANHRTFLLTLL. Cys-280 (S-palmitoyl cysteine intermediate) is an active-site residue. The helical transmembrane segment at 295-315 threads the bilayer; that stretch reads FLLTLLFFLLTSIYGISLVLA. The Lumenal segment spans residues 316–350; it reads SVCPDQRVLTALFYCPDVYSQYSSALCFTCAWYSS. A helical membrane pass occupies residues 351-371; sequence IVTGGLLHLLLLQILNISLNV. Over 372-428 the chain is Cytoplasmic; it reads TEREARLALREKSAQRRLWGLIVHTGHYSRGFWSNWTEFLTMTEDTQPAGHKTEDLV.

Belongs to the DHHC palmitoyltransferase family.

Its subcellular location is the golgi apparatus membrane. The protein localises to the golgi apparatus. It is found in the trans-Golgi network membrane. The catalysed reaction is L-cysteinyl-[protein] + hexadecanoyl-CoA = S-hexadecanoyl-L-cysteinyl-[protein] + CoA. Its function is as follows. Palmitoyltransferase that could catalyze the addition of palmitate onto various protein substrates and be involved in a variety of cellular processes. The chain is Palmitoyltransferase ZDHHC23-B from Danio rerio (Zebrafish).